The sequence spans 507 residues: (6-4) photolyase (507 aa).

6,7-dimethyl-8-(1-D-ribityl)lumazine is bound by residues 9–10, 32–40, and G105; these read GD and CEVMAEASY. Residues 265–269 and N273 contribute to the FAD site; that span reads HSLLS. C350 contacts [4Fe-4S] cluster. FAD is bound by residues 363-366, D397, and N406; that span reads YAHH. Residues C438, C441, and C454 each contribute to the [4Fe-4S] cluster site.

Belongs to the iron-sulfur bacterial cryptochrome/photolyase (FeS-BCP) family. The cofactor is FAD. It depends on 6,7-dimethyl-8-(1-D-ribityl)lumazine as a cofactor. Requires [4Fe-4S] cluster as cofactor.

It carries out the reaction (6-4) photoproduct (in DNA) = 2 pyrimidine residues (in DNA).. In terms of biological role, photolyase involved in the repair of UV-induced (6-4) lesions in DNA. Catalyzes the photoreactivation of (6-4) pyrimidine-pyrimidone photoproducts by using blue-light energy. Can repair (6-4) photoproducts in ssDNA as well as in dsDNA. This chain is (6-4) photolyase, found in Agrobacterium fabrum (strain C58 / ATCC 33970) (Agrobacterium tumefaciens (strain C58)).